The sequence spans 155 residues: Endoribonuclease YbeY (155 aa).

Zn(2+)-binding residues include H114, H118, and H124.

This sequence belongs to the endoribonuclease YbeY family. Zn(2+) serves as cofactor.

It localises to the cytoplasm. In terms of biological role, single strand-specific metallo-endoribonuclease involved in late-stage 70S ribosome quality control and in maturation of the 3' terminus of the 16S rRNA. The chain is Endoribonuclease YbeY from Shigella flexneri serotype 5b (strain 8401).